A 629-amino-acid polypeptide reads, in one-letter code: tRNA uridine 5-carboxymethylaminomethyl modification enzyme MnmG (629 aa).

Residues 13 to 18 (GGGHAG), valine 125, and serine 180 each bind FAD. 273-287 (GPRYCPSIEDKVMRF) is an NAD(+) binding site. Residue glutamine 370 participates in FAD binding.

The protein belongs to the MnmG family. As to quaternary structure, homodimer. Heterotetramer of two MnmE and two MnmG subunits. The cofactor is FAD.

It localises to the cytoplasm. NAD-binding protein involved in the addition of a carboxymethylaminomethyl (cmnm) group at the wobble position (U34) of certain tRNAs, forming tRNA-cmnm(5)s(2)U34. In Escherichia coli O157:H7, this protein is tRNA uridine 5-carboxymethylaminomethyl modification enzyme MnmG.